Reading from the N-terminus, the 273-residue chain is 2,3,4,5-tetrahydropyridine-2,6-dicarboxylate N-succinyltransferase (273 aa).

Substrate-binding residues include Arg-104 and Asp-141.

It belongs to the transferase hexapeptide repeat family. As to quaternary structure, homotrimer.

Its subcellular location is the cytoplasm. The catalysed reaction is (S)-2,3,4,5-tetrahydrodipicolinate + succinyl-CoA + H2O = (S)-2-succinylamino-6-oxoheptanedioate + CoA. Its pathway is amino-acid biosynthesis; L-lysine biosynthesis via DAP pathway; LL-2,6-diaminopimelate from (S)-tetrahydrodipicolinate (succinylase route): step 1/3. In Neisseria meningitidis serogroup C (strain 053442), this protein is 2,3,4,5-tetrahydropyridine-2,6-dicarboxylate N-succinyltransferase.